Here is a 110-residue protein sequence, read N- to C-terminus: Small ribosomal subunit protein bS16 (110 aa).

Residues 84–110 are disordered; sequence KRTARNNPEKAVPRKERKAQAEAAAKS. A compositionally biased stretch (basic and acidic residues) spans 90–103; that stretch reads NPEKAVPRKERKAQ.

Belongs to the bacterial ribosomal protein bS16 family.

The protein is Small ribosomal subunit protein bS16 of Nitrobacter hamburgensis (strain DSM 10229 / NCIMB 13809 / X14).